Here is a 279-residue protein sequence, read N- to C-terminus: Phycobilisome rod-core linker polypeptide CpcG1 (279 aa).

The PBS-linker domain maps to 11-189 (SSQNQRVEGY…YWRDRQTLNA (179 aa)).

This sequence belongs to the phycobilisome linker protein family. In terms of assembly, part of the phycobilisome, a hemidiscoidal structure that is composed of two distinct substructures: a core complex and a number of rods radiating from the core.

It is found in the cellular thylakoid membrane. Functionally, rod-core linker protein required for attachment of phycocyanin to allophycocyanin in cores of phycobilisomes. Linker polypeptides determine the state of aggregation and the location of the disk-shaped phycobiliprotein units within the phycobilisome and modulate their spectroscopic properties in order to mediate a directed and optimal energy transfer. The protein is Phycobilisome rod-core linker polypeptide CpcG1 of Nostoc sp. (strain PCC 7120 / SAG 25.82 / UTEX 2576).